We begin with the raw amino-acid sequence, 409 residues long: Peptidase T (409 aa).

His78 contributes to the Zn(2+) binding site. Residue Asp80 is part of the active site. Asp140 serves as a coordination point for Zn(2+). The active-site Proton acceptor is Glu173. Positions 174, 196, and 379 each coordinate Zn(2+).

It belongs to the peptidase M20B family. Requires Zn(2+) as cofactor.

Its subcellular location is the cytoplasm. The catalysed reaction is Release of the N-terminal residue from a tripeptide.. Functionally, cleaves the N-terminal amino acid of tripeptides. The chain is Peptidase T from Salmonella choleraesuis (strain SC-B67).